We begin with the raw amino-acid sequence, 430 residues long: Long-chain specific acyl-CoA dehydrogenase, mitochondrial (430 aa).

Residues 1-30 constitute a mitochondrion transit peptide; the sequence is MAARLLRGSLRVLGGHRAPRQLPAARCSHS. At K42 the chain carries N6-acetyllysine. S54 is subject to Phosphoserine. An N6-acetyllysine; alternate mark is found at K66 and K81. N6-succinyllysine; alternate occurs at positions 66 and 81. K92 and K95 each carry N6-acetyllysine. The residue at position 165 (K165) is an N6-succinyllysine. FAD is bound by residues 170 to 179 and 203 to 205; these read IAMTEPGAGS and FIS. S179 contacts substrate. 227 to 228 contacts substrate; that stretch reads AH. An N6-succinyllysine modification is found at K240. N6-acetyllysine; alternate occurs at positions 254 and 279. An N6-succinyllysine; alternate mark is found at K254 and K279. Residues Y282 and 289–292 each bind substrate; that span reads PQER. The active-site Proton acceptor is E291. Position 317 (R317) interacts with FAD. Residue K318 is modified to N6-acetyllysine. K322 carries the post-translational modification N6-acetyllysine; alternate. Residue K322 is modified to N6-succinyllysine; alternate. Q328 is a binding site for FAD. Residue K358 is modified to N6-acetyllysine. Residue S362 is modified to Phosphoserine. 385-389 lines the FAD pocket; sequence QLHGG. Position 412–413 (412–413) interacts with substrate; that stretch reads GG. Residue 414 to 416 coordinates FAD; the sequence is TNE.

It belongs to the acyl-CoA dehydrogenase family. In terms of assembly, homotetramer. Requires FAD as cofactor. In terms of processing, acetylation at Lys-318 and Lys-322 in proximity of the cofactor-binding sites strongly reduces catalytic activity. These sites are deacetylated by SIRT3.

The protein resides in the mitochondrion matrix. The catalysed reaction is a long-chain 2,3-saturated fatty acyl-CoA + oxidized [electron-transfer flavoprotein] + H(+) = a long-chain (2E)-enoyl-CoA + reduced [electron-transfer flavoprotein]. The enzyme catalyses hexanoyl-CoA + oxidized [electron-transfer flavoprotein] + H(+) = (2E)-hexenoyl-CoA + reduced [electron-transfer flavoprotein]. It catalyses the reaction octanoyl-CoA + oxidized [electron-transfer flavoprotein] + H(+) = (2E)-octenoyl-CoA + reduced [electron-transfer flavoprotein]. It carries out the reaction decanoyl-CoA + oxidized [electron-transfer flavoprotein] + H(+) = (2E)-decenoyl-CoA + reduced [electron-transfer flavoprotein]. The catalysed reaction is dodecanoyl-CoA + oxidized [electron-transfer flavoprotein] + H(+) = (2E)-dodecenoyl-CoA + reduced [electron-transfer flavoprotein]. The enzyme catalyses tetradecanoyl-CoA + oxidized [electron-transfer flavoprotein] + H(+) = (2E)-tetradecenoyl-CoA + reduced [electron-transfer flavoprotein]. It catalyses the reaction oxidized [electron-transfer flavoprotein] + hexadecanoyl-CoA + H(+) = (2E)-hexadecenoyl-CoA + reduced [electron-transfer flavoprotein]. It carries out the reaction octadecanoyl-CoA + oxidized [electron-transfer flavoprotein] + H(+) = (2E)-octadecenoyl-CoA + reduced [electron-transfer flavoprotein]. The catalysed reaction is eicosanoyl-CoA + oxidized [electron-transfer flavoprotein] + H(+) = (2E)-eicosenoyl-CoA + reduced [electron-transfer flavoprotein]. The enzyme catalyses docosanoyl-CoA + oxidized [electron-transfer flavoprotein] + H(+) = (2E)-docosenoyl-CoA + reduced [electron-transfer flavoprotein]. It catalyses the reaction tetracosanoyl-CoA + oxidized [electron-transfer flavoprotein] + H(+) = (2E)-tetracosenoyl-CoA + reduced [electron-transfer flavoprotein]. It carries out the reaction (5E)-tetradecenoyl-CoA + oxidized [electron-transfer flavoprotein] + H(+) = (2E,5E)-tetradecadienoyl-CoA + reduced [electron-transfer flavoprotein]. The catalysed reaction is (5Z)-tetradecenoyl-CoA + oxidized [electron-transfer flavoprotein] + H(+) = (2E,5Z)-tetradecadienoyl-CoA + reduced [electron-transfer flavoprotein]. The enzyme catalyses oxidized [electron-transfer flavoprotein] + (9Z)-octadecenoyl-CoA + H(+) = (2E,9Z)-octadecadienoyl-CoA + reduced [electron-transfer flavoprotein]. Its pathway is lipid metabolism; mitochondrial fatty acid beta-oxidation. Functionally, long-chain specific acyl-CoA dehydrogenase is one of the acyl-CoA dehydrogenases that catalyze the first step of mitochondrial fatty acid beta-oxidation, an aerobic process breaking down fatty acids into acetyl-CoA and allowing the production of energy from fats. The first step of fatty acid beta-oxidation consists in the removal of one hydrogen from C-2 and C-3 of the straight-chain fatty acyl-CoA thioester, resulting in the formation of trans-2-enoyl-CoA. Among the different mitochondrial acyl-CoA dehydrogenases, long-chain specific acyl-CoA dehydrogenase can act on saturated and unsaturated acyl-CoAs with 6 to 24 carbons with a preference for 8 to 18 carbons long primary chains. The polypeptide is Long-chain specific acyl-CoA dehydrogenase, mitochondrial (Homo sapiens (Human)).